The primary structure comprises 451 residues: CBL-interacting protein kinase 22 (451 aa).

A Protein kinase domain is found at Tyr26–Leu301. Residues Leu32–Val40 and Lys55 each bind ATP. Asp165 (proton acceptor) is an active-site residue. Positions Asp183 to Glu216 are activation loop. The NAF domain maps to Glu330–Gly356. The interval Arg361 to Val389 is PPI.

The protein belongs to the protein kinase superfamily. CAMK Ser/Thr protein kinase family. SNF1 subfamily. The cofactor is Mn(2+).

The enzyme catalyses L-seryl-[protein] + ATP = O-phospho-L-seryl-[protein] + ADP + H(+). The catalysed reaction is L-threonyl-[protein] + ATP = O-phospho-L-threonyl-[protein] + ADP + H(+). CIPK serine-threonine protein kinases interact with CBL proteins. Binding of a CBL protein to the regulatory NAF domain of CIPK protein lead to the activation of the kinase in a calcium-dependent manner. This chain is CBL-interacting protein kinase 22 (CIPK22), found in Oryza sativa subsp. japonica (Rice).